We begin with the raw amino-acid sequence, 118 residues long: 5-hydroxyisourate hydrolase (118 aa).

Substrate-binding residues include His7, Arg46, and Tyr115.

Belongs to the transthyretin family. 5-hydroxyisourate hydrolase subfamily. In terms of assembly, homotetramer.

The enzyme catalyses 5-hydroxyisourate + H2O = 5-hydroxy-2-oxo-4-ureido-2,5-dihydro-1H-imidazole-5-carboxylate + H(+). Catalyzes the hydrolysis of 5-hydroxyisourate (HIU) to 2-oxo-4-hydroxy-4-carboxy-5-ureidoimidazoline (OHCU). The protein is 5-hydroxyisourate hydrolase of Brucella suis biovar 1 (strain 1330).